The following is a 313-amino-acid chain: Synaptophysin (313 aa).

Topologically, residues 1–25 (MLLLADMDVVNQLVAGGQFRVVKEP) are cytoplasmic. In terms of domain architecture, MARVEL spans 21-227 (VVKEPLGFVK…NLWFVFKETG (207 aa)). The helical transmembrane segment at 26–49 (LGFVKVLQWVFAIFAFATCGSYSG) threads the bilayer. At 50–106 (ELQLSVDCANKTKSDLNIEVEFEYPFRLHEVYFEAPTCQGDPKKIFLVGNYSSSAEF) the chain is on the vesicular side. Residue N59 is glycosylated (N-linked (GlcNAc...) asparagine). A Phosphotyrosine modification is found at Y81. N99 carries N-linked (GlcNAc...) asparagine glycosylation. A helical transmembrane segment spans residues 107-130 (FVTVAVFAFLYSMGALATYIFLQN). Residues 131 to 137 (KYRENNK) are Cytoplasmic-facing. Residues 138-161 (GPMLDFLATAVFAFMWLVSSSAWA) form a helical membrane-spanning segment. Residues 162-199 (KGLSDVKMATDPENIIKGMHVCHQPGNTCKELRDPVTS) lie on the Vesicular side of the membrane. The chain crosses the membrane as a helical span at residues 200-223 (GLNTSVVFGFLNLVLWVGNLWFVF). Over 224 to 313 (KETGWAAPFL…GAPTSFSNQM (90 aa)) the chain is Cytoplasmic. The tract at residues 238–313 (GAPEKQPAPG…GAPTSFSNQM (76 aa)) is disordered. Over residues 253–263 (AGYGQGPGGYG) the composition is skewed to gly residues. The repeats, Gly/Tyr-rich stretch occupies residues 254–304 (GYGQGPGGYGPQDSYGPQGGYQPDYGQPASSGGGGYGPQGDYGQQGYGPQG). Residues 264 to 283 (PQDSYGPQGGYQPDYGQPAS) are compositionally biased toward low complexity. Gly residues predominate over residues 284–302 (SGGGGYGPQGDYGQQGYGP).

Belongs to the synaptophysin/synaptobrevin family. Homohexamer or homotetramer. Interacts with SRCIN1. Interacts with VAMP2; the interaction is inhibited by interaction of VAPM2 with SEPT8. In terms of processing, ubiquitinated; mediated by SIAH1 or SIAH2 and leading to its subsequent proteasomal degradation. Post-translationally, phosphorylated by SRC. As to expression, characteristic of a type of small (30-80 nm) neurosecretory vesicles, including presynaptic vesicles, but also vesicles of various neuroendocrine cells of both neuronal and epithelial phenotype.

It is found in the cytoplasmic vesicle. It localises to the secretory vesicle. The protein resides in the synaptic vesicle membrane. The protein localises to the synapse. Its subcellular location is the synaptosome. Functionally, possibly involved in structural functions as organizing other membrane components or in targeting the vesicles to the plasma membrane. Involved in the regulation of short-term and long-term synaptic plasticity. The sequence is that of Synaptophysin (SYP) from Bos taurus (Bovine).